Reading from the N-terminus, the 485-residue chain is Ataxin-10 (485 aa).

The protein belongs to the ataxin-10 family.

The protein localises to the cytoplasm. It is found in the perinuclear region. The protein resides in the midbody. Functionally, may play a role in the regulation of cytokinesis. May play a role in signaling by stimulating protein glycosylation. Induces neuritogenesis by activating the Ras-MAP kinase pathway and is necessary for the survival of cerebellar neurons. Does not appear to play a major role in ciliogenesis. This is Ataxin-10 (atxn10) from Xenopus tropicalis (Western clawed frog).